Reading from the N-terminus, the 141-residue chain is Small ribosomal subunit protein bS6 (141 aa).

Residues 96 to 141 (VTGPSAMMKTVEREEFRKASQAGNQTTAPAASPADHAAAPASADRS) form a disordered region. Positions 123–141 (APAASPADHAAAPASADRS) are enriched in low complexity.

It belongs to the bacterial ribosomal protein bS6 family.

In terms of biological role, binds together with bS18 to 16S ribosomal RNA. In Verminephrobacter eiseniae (strain EF01-2), this protein is Small ribosomal subunit protein bS6.